The primary structure comprises 20 residues: Putative phosphoglycerate kinase (20 aa).

This sequence belongs to the phosphoglycerate kinase family. In terms of assembly, monomer.

It localises to the cytoplasm. It catalyses the reaction (2R)-3-phosphoglycerate + ATP = (2R)-3-phospho-glyceroyl phosphate + ADP. It functions in the pathway carbohydrate degradation; glycolysis; pyruvate from D-glyceraldehyde 3-phosphate: step 2/5. The polypeptide is Putative phosphoglycerate kinase (pgk) (Clostridium pasteurianum).